Consider the following 438-residue polypeptide: Aspartate--tRNA(Asp/Asn) ligase (438 aa).

Glutamate 176 is a binding site for L-aspartate. Positions 198–201 (QLYK) are aspartate. Arginine 220 contacts L-aspartate. ATP-binding positions include 220–222 (RAE), 228–230 (RHL), and glutamate 361. 2 residues coordinate Mg(2+): glutamate 361 and serine 364. L-aspartate contacts are provided by serine 364 and arginine 368. Position 409–412 (409–412 (GIER)) interacts with ATP.

The protein belongs to the class-II aminoacyl-tRNA synthetase family. Type 2 subfamily. Homodimer. It depends on Mg(2+) as a cofactor.

The protein resides in the cytoplasm. The enzyme catalyses tRNA(Asx) + L-aspartate + ATP = L-aspartyl-tRNA(Asx) + AMP + diphosphate. In terms of biological role, aspartyl-tRNA synthetase with relaxed tRNA specificity since it is able to aspartylate not only its cognate tRNA(Asp) but also tRNA(Asn). Reaction proceeds in two steps: L-aspartate is first activated by ATP to form Asp-AMP and then transferred to the acceptor end of tRNA(Asp/Asn). The chain is Aspartate--tRNA(Asp/Asn) ligase from Methanococcus aeolicus (strain ATCC BAA-1280 / DSM 17508 / OCM 812 / Nankai-3).